The chain runs to 207 residues: Small ribosomal subunit protein uS2 (207 aa).

This sequence belongs to the universal ribosomal protein uS2 family.

This Methanocella arvoryzae (strain DSM 22066 / NBRC 105507 / MRE50) protein is Small ribosomal subunit protein uS2.